The primary structure comprises 386 residues: MATPSPLPSFAAIVVAAGKGLRAGQPVPKQFATWRGKPVLRHSVESLRAAGADPIVVAIPDHAGDVAAKALDGITEVVFVTGGQTRQDSVRAALERLSSVPPERVLIHDAARAILPTPVIERVLHGLDESGGAIPVLPVVDSLAVAAGERMADKADRESLRRVQTPQGFRFSDILAAHRAWTGATDAGDDAQVLMAHGGDIALVEGDEALKKLTFAEDFMADLLPVRVGTGFDVHKLEAGEELWLGGIRLEHDKGLAGHSDADVALHAIVDALLGAIGKGDIGDHFPPSDPQWKGAASSAFIEHAAKLVDEAGYRVGNIDLTIICEAPRIGPHRDAMGQRIAELLATSPDAISVKATTTEKLGFTGRGEGIAAQAAATVVRKDTPA.

The tract at residues 1 to 226 (MATPSPLPSF…EDFMADLLPV (226 aa)) is 2-C-methyl-D-erythritol 4-phosphate cytidylyltransferase. The interval 227-386 (RVGTGFDVHK…ATVVRKDTPA (160 aa)) is 2-C-methyl-D-erythritol 2,4-cyclodiphosphate synthase. D233 and H235 together coordinate a divalent metal cation. 4-CDP-2-C-methyl-D-erythritol 2-phosphate-binding positions include 233–235 (DVH) and 259–260 (HS). H267 is a binding site for a divalent metal cation. Residues 281–283 (DIG), 357–360 (TTTE), F364, and R367 contribute to the 4-CDP-2-C-methyl-D-erythritol 2-phosphate site.

This sequence in the N-terminal section; belongs to the IspD/TarI cytidylyltransferase family. IspD subfamily. The protein in the C-terminal section; belongs to the IspF family. Requires a divalent metal cation as cofactor.

It catalyses the reaction 2-C-methyl-D-erythritol 4-phosphate + CTP + H(+) = 4-CDP-2-C-methyl-D-erythritol + diphosphate. The catalysed reaction is 4-CDP-2-C-methyl-D-erythritol 2-phosphate = 2-C-methyl-D-erythritol 2,4-cyclic diphosphate + CMP. It functions in the pathway isoprenoid biosynthesis; isopentenyl diphosphate biosynthesis via DXP pathway; isopentenyl diphosphate from 1-deoxy-D-xylulose 5-phosphate: step 2/6. Its pathway is isoprenoid biosynthesis; isopentenyl diphosphate biosynthesis via DXP pathway; isopentenyl diphosphate from 1-deoxy-D-xylulose 5-phosphate: step 4/6. In terms of biological role, bifunctional enzyme that catalyzes the formation of 4-diphosphocytidyl-2-C-methyl-D-erythritol from CTP and 2-C-methyl-D-erythritol 4-phosphate (MEP) (IspD), and catalyzes the conversion of 4-diphosphocytidyl-2-C-methyl-D-erythritol 2-phosphate (CDP-ME2P) to 2-C-methyl-D-erythritol 2,4-cyclodiphosphate (ME-CPP) with a corresponding release of cytidine 5-monophosphate (CMP) (IspF). The protein is Bifunctional enzyme IspD/IspF of Erythrobacter litoralis (strain HTCC2594).